We begin with the raw amino-acid sequence, 126 residues long: Nitrogenase-stabilizing/protective protein NifW (126 aa).

The segment at 104–126 is disordered; sequence VPMSEITVERPATTQTDEKGQQR.

This sequence belongs to the NifW family. In terms of assembly, homotrimer; associates with NifD.

Its function is as follows. May protect the nitrogenase Fe-Mo protein from oxidative damage. This is Nitrogenase-stabilizing/protective protein NifW from Parafrankia sp. (strain EAN1pec).